Consider the following 662-residue polypeptide: Phosphomethylpyrimidine synthase (662 aa).

Residues N235, M264, Y293, H329, S349–G351, D390–R393, and E429 each bind substrate. H433 is a binding site for Zn(2+). Y456 serves as a coordination point for substrate. H497 is a binding site for Zn(2+). Residues C577, C580, and C585 each coordinate [4Fe-4S] cluster.

The protein belongs to the ThiC family. As to quaternary structure, homodimer. It depends on [4Fe-4S] cluster as a cofactor.

The enzyme catalyses 5-amino-1-(5-phospho-beta-D-ribosyl)imidazole + S-adenosyl-L-methionine = 4-amino-2-methyl-5-(phosphooxymethyl)pyrimidine + CO + 5'-deoxyadenosine + formate + L-methionine + 3 H(+). Its pathway is cofactor biosynthesis; thiamine diphosphate biosynthesis. Functionally, catalyzes the synthesis of the hydroxymethylpyrimidine phosphate (HMP-P) moiety of thiamine from aminoimidazole ribotide (AIR) in a radical S-adenosyl-L-methionine (SAM)-dependent reaction. The polypeptide is Phosphomethylpyrimidine synthase (Shewanella halifaxensis (strain HAW-EB4)).